Here is a 596-residue protein sequence, read N- to C-terminus: Chaperonin 60 subunit beta 2, chloroplastic (596 aa).

The transit peptide at 1–50 (MASTFTATSSLGSLLAPNAIKLSSATSISSSSFGRRHNVCVRRSRPAIVC) directs the protein to the chloroplast. Phosphoserine occurs at positions 97 and 474. Residues 388–489 (TQEAVNKRVV…KDTLENDEEK (102 aa)) adopt a coiled-coil conformation.

Belongs to the chaperonin (HSP60) family. As to quaternary structure, part of the Cpn60 complex composed of 7 alpha and 7 beta subunits. Can also form a complex composed of 14 beta subunits only. Both complexes show ATPase activity. The Cpn60 complex interacts with the Cpn10 complex. Interacts with RAB during heat stress.

It localises to the plastid. It is found in the chloroplast stroma. Its function is as follows. Involved in protein assisted folding. This is Chaperonin 60 subunit beta 2, chloroplastic (CPN60B2) from Arabidopsis thaliana (Mouse-ear cress).